A 380-amino-acid chain; its full sequence is MPIDPVALTADLVRCPSVTPEEGGALDLIERILSGAGFDCTRVDRNGVPNLFARWGRKGANRTFGFNGHTDVVPVGDAAAWTRDPFGGEIADGWLWGRGATDMKSGVAAFVAAAVDFVQETPPDGAVVLTITGDEEGDAADGTVALLDWMAAEGEAMSVCLVGEPTCPERLGEMMKIGRRGSMTAFFTARGVQGHSAYPHRAKNPVAALARLIDRLSSHDLDRGTEHFDASTLAVTTFDTGNPATNVIPALCRATVNIRFNDAHSGASLTRWLEEEAARVTAETGVEIALSAKISGESFLTPPGELSELVARAVEAETGLRPEPSTSGGTSDARFVRAHCPVVEFGLVGKTMHQVDERVEVGQIEPLKAIYLRILKDYFA.

Zn(2+) is bound at residue His69. The active site involves Asp71. Asp102 is a Zn(2+) binding site. The Proton acceptor role is filled by Glu135. Residues Glu136, Glu164, and His353 each coordinate Zn(2+).

This sequence belongs to the peptidase M20A family. DapE subfamily. In terms of assembly, homodimer. Zn(2+) is required as a cofactor. The cofactor is Co(2+).

It catalyses the reaction N-succinyl-(2S,6S)-2,6-diaminopimelate + H2O = (2S,6S)-2,6-diaminopimelate + succinate. It participates in amino-acid biosynthesis; L-lysine biosynthesis via DAP pathway; LL-2,6-diaminopimelate from (S)-tetrahydrodipicolinate (succinylase route): step 3/3. Catalyzes the hydrolysis of N-succinyl-L,L-diaminopimelic acid (SDAP), forming succinate and LL-2,6-diaminopimelate (DAP), an intermediate involved in the bacterial biosynthesis of lysine and meso-diaminopimelic acid, an essential component of bacterial cell walls. This Cereibacter sphaeroides (strain KD131 / KCTC 12085) (Rhodobacter sphaeroides) protein is Succinyl-diaminopimelate desuccinylase.